Reading from the N-terminus, the 104-residue chain is Large ribosomal subunit protein eL42 (104 aa).

A disordered region spans residues 22-56 (KVSQAKKSKDNPRAQGNRRYARKQRGYGGQTKPIL).

Belongs to the eukaryotic ribosomal protein eL42 family.

The chain is Large ribosomal subunit protein eL42 (RPL44) from Encephalitozoon cuniculi (strain GB-M1) (Microsporidian parasite).